The following is a 386-amino-acid chain: Succinate--CoA ligase [ADP-forming] subunit beta (386 aa).

Residues 9–244 (KEILRSYGVS…LDEEDPKEVE (236 aa)) enclose the ATP-grasp domain. Residues Lys46, 53–55 (GRG), Glu99, Cys102, and Glu107 each bind ATP. Residues Asn199 and Asp213 each contribute to the Mg(2+) site. Substrate contacts are provided by residues Asn264 and 321–323 (GIM).

The protein belongs to the succinate/malate CoA ligase beta subunit family. As to quaternary structure, heterotetramer of two alpha and two beta subunits. It depends on Mg(2+) as a cofactor.

The catalysed reaction is succinate + ATP + CoA = succinyl-CoA + ADP + phosphate. It catalyses the reaction GTP + succinate + CoA = succinyl-CoA + GDP + phosphate. It functions in the pathway carbohydrate metabolism; tricarboxylic acid cycle; succinate from succinyl-CoA (ligase route): step 1/1. Functionally, succinyl-CoA synthetase functions in the citric acid cycle (TCA), coupling the hydrolysis of succinyl-CoA to the synthesis of either ATP or GTP and thus represents the only step of substrate-level phosphorylation in the TCA. The beta subunit provides nucleotide specificity of the enzyme and binds the substrate succinate, while the binding sites for coenzyme A and phosphate are found in the alpha subunit. This chain is Succinate--CoA ligase [ADP-forming] subunit beta, found in Geobacillus thermodenitrificans (strain NG80-2).